A 66-amino-acid chain; its full sequence is Protein translocase subunit SecE (66 aa).

Residues 29 to 49 (LVASTLVVVVAVFIFSLICLV) form a helical membrane-spanning segment.

Belongs to the SecE/SEC61-gamma family. Component of the Sec protein translocase complex. Heterotrimer consisting of SecY, SecE and SecG subunits. The heterotrimers can form oligomers, although 1 heterotrimer is thought to be able to translocate proteins. Interacts with the ribosome. Interacts with SecDF, and other proteins may be involved. Interacts with SecA.

The protein resides in the cell inner membrane. Functionally, essential subunit of the Sec protein translocation channel SecYEG. Clamps together the 2 halves of SecY. May contact the channel plug during translocation. The chain is Protein translocase subunit SecE from Rickettsia felis (strain ATCC VR-1525 / URRWXCal2) (Rickettsia azadi).